We begin with the raw amino-acid sequence, 437 residues long: MANPVVAIVGRPNVGKSTLFNRIAGERIAIVEDTPGVTRDRLYAHGEWLGKNFSMIDTGGIEMSDQPLLTQIRQQAEIAIEEADVIIMVVNVENGVTDADEQVAQILYRSNKPVVLAVNKVDNPERRLDVYDFYRLGLGEPYPVSSVHGVGLGDMLDAVIENFAEKDAEEEDDRIRFSFIGRPNVGKSSLVNAILGENRVIVSDMAGTTRDAINTQFTAKDGREFTMVDTAGIKKKGKLYENTERYALMRSMRAIDDSDVVLVVLNAEEGIRELDKHIAGYAHEAGRAVIIVVNKWDTIPDRDQRTMTDFTNLIRHEFQYLSYAPIVFVSAKTKQRLSRLPEMIEEAYDHQHRRIQSAVLNDVLMDALAANPTPSSNGRRLRVYYATQVAVAPPTFVIFVNDPDLMHFSYARYLENRIRAAFDFTGTPIRLIKRRRK.

2 EngA-type G domains span residues 4–167 and 175–352; these read PVVA…AEKD and IRFS…DHQH. GTP contacts are provided by residues 10-17, 57-61, 119-122, 181-188, 229-233, and 294-297; these read GRPNVGKS, DTGGI, NKVD, DTAGI, and NKWD. A KH-like domain is found at 353-437; it reads RRIQSAVLND…PIRLIKRRRK (85 aa).

It belongs to the TRAFAC class TrmE-Era-EngA-EngB-Septin-like GTPase superfamily. EngA (Der) GTPase family. As to quaternary structure, associates with the 50S ribosomal subunit.

In terms of biological role, GTPase that plays an essential role in the late steps of ribosome biogenesis. This chain is GTPase Der, found in Limosilactobacillus fermentum (strain NBRC 3956 / LMG 18251) (Lactobacillus fermentum).